Here is a 133-residue protein sequence, read N- to C-terminus: Capsid protein (133 aa).

The protein belongs to the Leviviricetes capsid protein family. As to quaternary structure, homodimer. The capsid protein dimer binds to the viral RNA via an operator hairpin, but also many other RNA sequences in the viral genome.

The protein resides in the virion. Functionally, capsid protein self-assembles to form an icosahedral capsid with a T=3 symmetry, about 26 nm in diameter, and consisting of 89 capsid proteins dimers (178 capsid proteins). Involved in viral genome encapsidation through the interaction between a capsid protein dimer and the multiple packaging signals present in the RNA genome. Binding of the capsid proteins to the viral RNA induces a conformational change required for efficient T=3 shell formation. The capsid also contains 1 copy of the A2 maturation protein. In terms of biological role, acts as a translational repressor of viral replicase synthesis late in infection. This latter function is the result of capsid protein interaction with an RNA hairpin which contains the replicase ribosome-binding site. The chain is Capsid protein from Escherichia coli.